Reading from the N-terminus, the 349-residue chain is UDP-N-acetylenolpyruvoylglucosamine reductase (349 aa).

The region spanning 24–197 (FGIDATARFA…VAVTFRLPKR (174 aa)) is the FAD-binding PCMH-type domain. Arg-173 is a catalytic residue. The active-site Proton donor is the Ser-249. The active site involves Glu-345.

It belongs to the MurB family. The cofactor is FAD.

It is found in the cytoplasm. The catalysed reaction is UDP-N-acetyl-alpha-D-muramate + NADP(+) = UDP-N-acetyl-3-O-(1-carboxyvinyl)-alpha-D-glucosamine + NADPH + H(+). Its pathway is cell wall biogenesis; peptidoglycan biosynthesis. Its function is as follows. Cell wall formation. The sequence is that of UDP-N-acetylenolpyruvoylglucosamine reductase from Burkholderia ambifaria (strain MC40-6).